The following is a 312-amino-acid chain: Olfactory receptor 2M5 (312 aa).

Over 1–25 (MAWENQTFNSDFILLGIFNHSPTHT) the chain is Extracellular. N-linked (GlcNAc...) asparagine glycosylation is present at N5. The helical transmembrane segment at 26–49 (FLFFLVLAIFSVAFMGNSVMVLLI) threads the bilayer. Residues 50-57 (YLDTQLHT) lie on the Cytoplasmic side of the membrane. A helical membrane pass occupies residues 58–79 (PMYFLLSQLFLMDLMLICSTVP). The Extracellular portion of the chain corresponds to 80-100 (KMAFNYLSGSKSISMAGCATQ). Residues C97 and C189 are joined by a disulfide bond. A helical membrane pass occupies residues 101-120 (IFFYVSLLGSECFLLAVMSY). Residues 121-139 (DRYIAICHPLRYTNLMRPK) are Cytoplasmic-facing. The helical transmembrane segment at 140–158 (ICGLMTAFSWILGSMDAII) threads the bilayer. Over 159 to 195 (DAVATFSFSYCGSREIAHFFCDFPSLLILSCNDTSIF) the chain is Extracellular. Residues 196 to 219 (EKVLFICCIVMIVFPVAIIIASYA) traverse the membrane as a helical segment. Residues 220–236 (RVILAVIHMGSGEGRRK) are Cytoplasmic-facing. A helical transmembrane segment spans residues 237–259 (AFTTCSSHLMVVGMYYGAGLFMY). Residues 260–272 (IRPTSDRSPMQDK) lie on the Extracellular side of the membrane. A helical membrane pass occupies residues 273-292 (LVSVFYTILTPMLNPLIYSL). Over 293 to 311 (RNKEVTRALRKVLGKGKCG) the chain is Cytoplasmic.

This sequence belongs to the G-protein coupled receptor 1 family.

It is found in the cell membrane. Its function is as follows. Odorant receptor. This chain is Olfactory receptor 2M5 (OR2M5), found in Homo sapiens (Human).